A 394-amino-acid polypeptide reads, in one-letter code: Quinolinate synthase (394 aa).

Positions 67 and 84 each coordinate iminosuccinate. Cysteine 131 is a binding site for [4Fe-4S] cluster. Residues 163 to 165 (YMN) and serine 184 each bind iminosuccinate. Cysteine 254 contributes to the [4Fe-4S] cluster binding site. Iminosuccinate-binding positions include 280–282 (HPE) and threonine 297. Position 346 (cysteine 346) interacts with [4Fe-4S] cluster.

Belongs to the quinolinate synthase family. Type 3 subfamily. [4Fe-4S] cluster serves as cofactor.

It is found in the cytoplasm. It carries out the reaction iminosuccinate + dihydroxyacetone phosphate = quinolinate + phosphate + 2 H2O + H(+). It participates in cofactor biosynthesis; NAD(+) biosynthesis; quinolinate from iminoaspartate: step 1/1. Functionally, catalyzes the condensation of iminoaspartate with dihydroxyacetone phosphate to form quinolinate. This chain is Quinolinate synthase, found in Streptomyces coelicolor (strain ATCC BAA-471 / A3(2) / M145).